A 354-amino-acid polypeptide reads, in one-letter code: Rhodopsin (354 aa).

Over 1–36 the chain is Extracellular; the sequence is MNGTEGPNFYIPMSNKTGVVRSPFDYPQYYLAEPWK. N-linked (GlcNAc...) (hybrid) asparagine glycosylation occurs at Asn2. Asn15 is a glycosylation site (N-linked (GlcNAc...) asparagine). A helical membrane pass occupies residues 37–61; that stretch reads YSVLAAYMFLLILLGLPINFMTLYV. At 62-73 the chain is on the cytoplasmic side; the sequence is TIQHKKLRTPLN. The chain crosses the membrane as a helical span at residues 74–96; that stretch reads YILLNLGVCNHFMVLCGFTITMY. Residues 97–110 lie on the Extracellular side of the membrane; sequence TSLHGYFVFGQTGC. Cys110 and Cys187 are disulfide-bonded. The chain crosses the membrane as a helical span at residues 111-133; the sequence is YFEGFFATLGGEIALWSLVVLAI. Positions 134-136 match the 'Ionic lock' involved in activated form stabilization motif; that stretch reads ERY. At 134–152 the chain is on the cytoplasmic side; sequence ERYIVVCKPMSNFRFGENH. The helical transmembrane segment at 153–173 threads the bilayer; that stretch reads AMMGVAFTWIMALACAVPPLF. The Extracellular portion of the chain corresponds to 174-202; that stretch reads GWSRYIPEGMQCSCGVDYYTLKPEVNNES. The helical transmembrane segment at 203–224 threads the bilayer; that stretch reads FVIYMFVVHFLIPLIIISFCYG. At 225-252 the chain is on the cytoplasmic side; sequence RLVCTVKEAAAQQQESATTQKAEKEVTR. The helical transmembrane segment at 253–274 threads the bilayer; that stretch reads MVIIMVIFFLICWVPYAYVAFY. The Extracellular segment spans residues 275–286; sequence IFTHQGSEFGPI. The chain crosses the membrane as a helical span at residues 287–308; the sequence is FMTVPAFFAKSSAIYNPVIYIM. Residue Lys296 is modified to N6-(retinylidene)lysine. Residues 309–354 are Cytoplasmic-facing; sequence LNKQFRNCMITTLCCGKNPFGDDDASSAATSKTEATSVSTSQVSPA. S-palmitoyl cysteine attachment occurs at residues Cys322 and Cys323. The segment at 332 to 354 is disordered; it reads DASSAATSKTEATSVSTSQVSPA. Residues 334–354 show a composition bias toward low complexity; that stretch reads SSAATSKTEATSVSTSQVSPA.

This sequence belongs to the G-protein coupled receptor 1 family. Opsin subfamily. Contains one covalently linked retinal chromophore. Upon light absorption, the covalently bound 11-cis-retinal is converted to all-trans-retinal. After hydrolysis of the Schiff base and release of the covalently bound all-trans-retinal, active rhodopsin is regenerated by binding of a fresh molecule of 11-cis-retinal. Detected in retina rod photoreceptor cell outer segments (at protein level). Detected in retina.

Its subcellular location is the membrane. The protein resides in the cell projection. It localises to the cilium. It is found in the photoreceptor outer segment. Photoreceptor required for image-forming vision at low light intensity. Required for photoreceptor cell viability after birth. Light-induced isomerization of 11-cis to all-trans retinal triggers a conformational change that activates signaling via G-proteins. Subsequent receptor phosphorylation mediates displacement of the bound G-protein alpha subunit by arrestin and terminates signaling. The sequence is that of Rhodopsin (RHO) from Lithobates pipiens (Northern leopard frog).